Reading from the N-terminus, the 351-residue chain is MEPKRIREGYLVKRGSVFNTWKPMWVVLLEDGIEFYKKKSDNSPKGMIPLKGSTLTSPCQDFGKRMFVFKITTTKQQDHFFQAAFLEERDSWVRDTKKAIKCIEGGQKFARKSTRRSIRLPETVDLGALYLSMKDIEKGIKELNLEKDKKIFNHCFTGNCVIDWLVSNKSVRNRQEGLMIASSLLGEGYLQPAGELSKNAADGMAEHPFLDNPDAFYYFPDSGFFCEENSSDDDVILKEEFRGVIIKQGCLLKQGHRRKNWKVRKFILREDPAYLHYYDPAAGGEEPLGAIHLRGCVVTSVESNPDVRKSEEENLFEIITADEVHYFLQAATPKERTEWIKAIQVASRTGK.

In terms of domain architecture, PH 1 spans 4-101 (KRIREGYLVK…WVRDTKKAIK (98 aa)). An N6-acetyllysine modification is found at K64. S113 and S117 each carry phosphoserine. Positions 136–221 (IEKGIKELNL…NPDAFYYFPD (86 aa)) constitute a DEP domain. One can recognise a PH 2 domain in the interval 244-348 (VIIKQGCLLK…WIKAIQVASR (105 aa)).

Its function is as follows. Major protein kinase C substrate of platelets. This is Pleckstrin (PLEK) from Canis lupus familiaris (Dog).